A 167-amino-acid polypeptide reads, in one-letter code: SsrA-binding protein (167 aa).

The tract at residues 139 to 167 (QAHDKRHAEKEREWQRDKQRIMRAHNRNA) is disordered. The segment covering 144-158 (RHAEKEREWQRDKQR) has biased composition (basic and acidic residues).

The protein belongs to the SmpB family.

It is found in the cytoplasm. Functionally, required for rescue of stalled ribosomes mediated by trans-translation. Binds to transfer-messenger RNA (tmRNA), required for stable association of tmRNA with ribosomes. tmRNA and SmpB together mimic tRNA shape, replacing the anticodon stem-loop with SmpB. tmRNA is encoded by the ssrA gene; the 2 termini fold to resemble tRNA(Ala) and it encodes a 'tag peptide', a short internal open reading frame. During trans-translation Ala-aminoacylated tmRNA acts like a tRNA, entering the A-site of stalled ribosomes, displacing the stalled mRNA. The ribosome then switches to translate the ORF on the tmRNA; the nascent peptide is terminated with the 'tag peptide' encoded by the tmRNA and targeted for degradation. The ribosome is freed to recommence translation, which seems to be the essential function of trans-translation. This is SsrA-binding protein from Xylella fastidiosa (strain 9a5c).